A 238-amino-acid polypeptide reads, in one-letter code: tRNA (guanine-N(7)-)-methyltransferase (238 aa).

S-adenosyl-L-methionine-binding residues include Glu68, Glu93, Asp120, and Asp143. Asp143 is a catalytic residue. Substrate-binding positions include Lys147, Asp179, and 216 to 219; that span reads TKFE.

This sequence belongs to the class I-like SAM-binding methyltransferase superfamily. TrmB family.

The catalysed reaction is guanosine(46) in tRNA + S-adenosyl-L-methionine = N(7)-methylguanosine(46) in tRNA + S-adenosyl-L-homocysteine. The protein operates within tRNA modification; N(7)-methylguanine-tRNA biosynthesis. Its function is as follows. Catalyzes the formation of N(7)-methylguanine at position 46 (m7G46) in tRNA. The sequence is that of tRNA (guanine-N(7)-)-methyltransferase from Shewanella amazonensis (strain ATCC BAA-1098 / SB2B).